The sequence spans 100 residues: MNLSPREKDKLLISMAAMVARRRLERGVKLNYPEAIALISDFVVEGARDGRAVADLMEAGAHVISRDQVMDGIADMIHDVQVEATFPDGTKLVTVHEPIR.

The protein belongs to the urease gamma subunit family. Heterotrimer of UreA (gamma), UreB (beta) and UreC (alpha) subunits. Three heterotrimers associate to form the active enzyme.

The protein localises to the cytoplasm. It carries out the reaction urea + 2 H2O + H(+) = hydrogencarbonate + 2 NH4(+). It functions in the pathway nitrogen metabolism; urea degradation; CO(2) and NH(3) from urea (urease route): step 1/1. The protein is Urease subunit gamma of Agrobacterium fabrum (strain C58 / ATCC 33970) (Agrobacterium tumefaciens (strain C58)).